Consider the following 146-residue polypeptide: ATP synthase epsilon chain (146 aa).

This sequence belongs to the ATPase epsilon chain family. As to quaternary structure, F-type ATPases have 2 components, CF(1) - the catalytic core - and CF(0) - the membrane proton channel. CF(1) has five subunits: alpha(3), beta(3), gamma(1), delta(1), epsilon(1). CF(0) has three main subunits: a, b and c.

Its subcellular location is the cell inner membrane. Its function is as follows. Produces ATP from ADP in the presence of a proton gradient across the membrane. The protein is ATP synthase epsilon chain of Rhodospirillum centenum (strain ATCC 51521 / SW).